The following is a 59-amino-acid chain: Light-harvesting protein B-800-850 alpha chain A (59 aa).

Topologically, residues 1-11 (MNQARIWTVVK) are cytoplasmic. Residues 12-35 (PTVGLPLLLGSVTVIAILVHFAVL) traverse the membrane as a helical segment. His31 is a binding site for a bacteriochlorophyll. The Periplasmic segment spans residues 36 to 59 (SHTTWFSKYWNGKAAAIESSVNVG).

This sequence belongs to the antenna complex alpha subunit family. In terms of assembly, the core complex is formed by different alpha and beta chains, binding bacteriochlorophyll molecules, and arranged most probably in tetrameric structures disposed around the reaction center. The non-pigmented gamma chains may constitute additional components.

It is found in the cell inner membrane. Its function is as follows. Antenna complexes are light-harvesting systems, which transfer the excitation energy to the reaction centers. The polypeptide is Light-harvesting protein B-800-850 alpha chain A (pucAA) (Rhodopseudomonas palustris (strain ATCC BAA-98 / CGA009)).